The primary structure comprises 642 residues: Nucleolar GTP-binding protein 1 (642 aa).

Residues 168-340 (RTLLICGYPN…VRNKACEKLL (173 aa)) form the OBG-type G domain. GTP-binding positions include 174-181 (GYPNVGKS), 220-224 (DTPGI), and 288-291 (NKTD). Residues 585-642 (MDGVADASMRSKADRMAKLHRRERNRQARQGEADRHATASLPKHLFSGKRGIGSNDRR) form a disordered region. Over residues 609 to 621 (NRQARQGEADRHA) the composition is skewed to basic and acidic residues.

It belongs to the TRAFAC class OBG-HflX-like GTPase superfamily. OBG GTPase family. NOG subfamily.

It is found in the nucleus. The protein resides in the nucleolus. Functionally, involved in the biogenesis of the 60S ribosomal subunit. This chain is Nucleolar GTP-binding protein 1 (NOG1), found in Eremothecium gossypii (strain ATCC 10895 / CBS 109.51 / FGSC 9923 / NRRL Y-1056) (Yeast).